The chain runs to 201 residues: Glutathione peroxidase 1, mitochondrial (201 aa).

A mitochondrion-targeting transit peptide spans 1–27; sequence MLLTRKNVAVRPARAARRDVRAMSLLG. The active site involves U75. Residue U75 is a non-standard amino acid, selenocysteine.

It localises to the mitochondrion. The catalysed reaction is 2 glutathione + H2O2 = glutathione disulfide + 2 H2O. In terms of biological role, may constitute a glutathione peroxidase-like protective system against oxidative stresses. Hydrogen peroxide, tert-butyl hydroperoxide and cumene, but not phosphatidylcholine hydroperoxide, can act as acceptors. The chain is Glutathione peroxidase 1, mitochondrial from Chlamydomonas reinhardtii (Chlamydomonas smithii).